The chain runs to 238 residues: 3-dehydroquinate dehydratase (238 aa).

Residues 35–37 (ELR) and Arg70 contribute to the 3-dehydroquinate site. Catalysis depends on His133, which acts as the Proton donor/acceptor. Lys160 serves as the catalytic Schiff-base intermediate with substrate. Residues Arg202 and Gln225 each coordinate 3-dehydroquinate.

Belongs to the type-I 3-dehydroquinase family. In terms of assembly, homodimer.

It catalyses the reaction 3-dehydroquinate = 3-dehydroshikimate + H2O. The protein operates within metabolic intermediate biosynthesis; chorismate biosynthesis; chorismate from D-erythrose 4-phosphate and phosphoenolpyruvate: step 3/7. Functionally, involved in the third step of the chorismate pathway, which leads to the biosynthesis of aromatic amino acids. Catalyzes the cis-dehydration of 3-dehydroquinate (DHQ) and introduces the first double bond of the aromatic ring to yield 3-dehydroshikimate. This Staphylococcus aureus (strain bovine RF122 / ET3-1) protein is 3-dehydroquinate dehydratase.